The chain runs to 844 residues: MVTVMPLEMEKTISKLMFDFQRNSTSDDDSGCALEEYAWVPPGLKPEQVHQYYSCLPEEKVPYVNSPGEKLRIKQLLHQLPPHDNEVRYCNSLDEEEKRELKLFSSQRKRENLGRGNVRPFPVTMTGAICEQCGGQINGGDIAVFASRAGHGVCWHPPCFVCTVCNELLVDLIYFYQDGKIYCGRHHAECLKPRCAACDEIIFADECTEAEGRHWHMKHFCCFECETVLGGQRYIMKEGRPYCCHCFESLYAEYCDTCAQHIGIDQGQMTYDGQHWHATETCFCCAHCKKSLLGRPFLPKQGQIFCSRACSAGEDPNGSDSSDSAFQNARAKESRRSAKIGKNKGKTEEPMLNQHSQLQVSSNRLSADVDPLSLQMDMLSLSSQTPSLNRDPIWRSREEPYHYGNKMEQNQTQSPLQLLSQCNIRTSYSPGGQGAGAQPEMWGKHFSNPKRSSSLAMTGHAGSFIKECREDYYPGRLRSQESYSDMSSQSFSETRGSIQVPKYEEEEEEEGGLSTQQCRTRHPISSLKYTEDMTPTEQTPRGSMESLALSNATGLSADGGAKRQEHLSRFSMPDLSKDSGMNVSEKLSNMGTLNSSMQFRSAESVRSLLSAQQYQEMEGNLHQLSNPIGYRDLQSHGRMHQSFDFDGGMAGSKLPGQEGVRIQPMSERTRRRATSRDDNRRFRPHRSRRSRRSRSDNALHLASEREAISRLKDRPPLRAREDYDQFMRQRSFQESMGHGSRRDLYGQCPRTVSDLALQNAFGDRWGPYFAEYDWCSTCSSSSESDNEGYFLGEPIPQPARLRYVTSDELLHKYSSYGLPKSSTLGGRGQLHSRKRQKSKNCIIS.

The region spanning 18-126 (FDFQRNSTSD…NVRPFPVTMT (109 aa)) is the PET domain. The residue at position 92 (S92) is a Phosphoserine. 3 LIM zinc-binding domains span residues 128 to 193 (AICE…CLKP), 193 to 253 (PRCA…LYAE), and 253 to 317 (EYCD…EDPN). Disordered stretches follow at residues 314–350 (EDPN…TEEP) and 481–519 (ESYS…QQCR). Over residues 318-327 (GSDSSDSAFQ) the composition is skewed to polar residues. A phosphoserine mark is found at S319, S321, and S322. Positions 481–493 (ESYSDMSSQSFSE) are enriched in low complexity. A phosphothreonine mark is found at T534, T536, and T539. Phosphoserine is present on residues S543, S546, S607, and S642. Residues 639–709 (MHQSFDFDGG…HLASEREAIS (71 aa)) form a disordered region. Residues 682 to 692 (FRPHRSRRSRR) are compositionally biased toward basic residues. The span at 693-709 (SRSDNALHLASEREAIS) shows a compositional bias: basic and acidic residues. S731 bears the Phosphoserine mark. Residues 822–844 (STLGGRGQLHSRKRQKSKNCIIS) form a disordered region. C841 carries the cysteine methyl ester modification. C841 is lipidated: S-farnesyl cysteine. Residues 842 to 844 (IIS) constitute a propeptide, removed in mature form.

Belongs to the prickle / espinas / testin family. Expressed in brain, eye and testis. Additionally in fetal brain, adult cartilage, pancreatic islet, gastric cancer and uterus tumors.

It is found in the nucleus membrane. In Homo sapiens (Human), this protein is Prickle-like protein 2 (PRICKLE2).